The following is a 502-amino-acid chain: Mannitol 2-dehydrogenase (502 aa).

37–48 (IVHIGVGGFHRA) contributes to the NAD(+) binding site.

Belongs to the mannitol dehydrogenase family. As to quaternary structure, monomer.

It carries out the reaction D-mannitol + NAD(+) = D-fructose + NADH + H(+). In terms of biological role, catalyzes the NAD(H)-dependent interconversion of D-fructose and D-mannitol in the mannitol metabolic pathway. The protein is Mannitol 2-dehydrogenase of Emericella nidulans (strain FGSC A4 / ATCC 38163 / CBS 112.46 / NRRL 194 / M139) (Aspergillus nidulans).